Consider the following 340-residue polypeptide: uncharacterized protein (340 aa).

The helical transmembrane segment at 6-26 (ITFGLLVLMVCVILFVLYVQL) threads the bilayer.

It localises to the cell membrane. This is an uncharacterized protein from Bacillus subtilis (strain 168).